The chain runs to 62 residues: DNA-directed RNA polymerase subunit Rpo10 (62 aa).

Zn(2+)-binding residues include Cys-6, Cys-9, Cys-43, and Cys-44.

Belongs to the archaeal Rpo10/eukaryotic RPB10 RNA polymerase subunit family. In terms of assembly, part of the RNA polymerase complex. Requires Zn(2+) as cofactor.

The protein localises to the cytoplasm. The catalysed reaction is RNA(n) + a ribonucleoside 5'-triphosphate = RNA(n+1) + diphosphate. Its function is as follows. DNA-dependent RNA polymerase (RNAP) catalyzes the transcription of DNA into RNA using the four ribonucleoside triphosphates as substrates. The chain is DNA-directed RNA polymerase subunit Rpo10 from Methanospirillum hungatei JF-1 (strain ATCC 27890 / DSM 864 / NBRC 100397 / JF-1).